The following is a 584-amino-acid chain: Endogenous retrovirus group FC1 Env polyprotein (584 aa).

The first 22 residues, 1-22 (MARPSPLCLLLLLTLLTPIVPS), serve as a signal peptide directing secretion. Over 23-518 (NSLLTEPPFR…GWWQSPLTTW (496 aa)) the chain is Extracellular. Asparagine 69 and asparagine 247 each carry an N-linked (GlcNAc...) asparagine glycan. The CXXC motif lies at 251-254 (CFLC). Residues asparagine 272, asparagine 276, asparagine 308, asparagine 313, asparagine 322, asparagine 334, asparagine 342, and asparagine 346 are each glycosylated (N-linked (GlcNAc...) asparagine). Residues 384–404 (AVFPPLVIGVSLTSSLVASGL) form a fusion peptide region. Positions 449–465 (MQNRRALDLLTADKGGT) match the CKS-17 motif. A disulfide bond links cysteine 466 and cysteine 473. The short motif at 466-474 (CMFLGEECC) is the CX6CC element. The N-linked (GlcNAc...) asparagine glycan is linked to asparagine 478. Residues 519 to 539 (IIPFISPILIICLLLLIAPCV) form a helical membrane-spanning segment. The Cytoplasmic portion of the chain corresponds to 540-584 (LKFIKNRISEVSRVTVNQMLLHPYSRLPTSEDHYDDALTQQEAAR).

This sequence belongs to the gamma type-C retroviral envelope protein family. HERV class-I F(c)1 env subfamily. The surface (SU) and transmembrane (TM) proteins form a heterodimer. SU and TM are attached by noncovalent interactions or by a labile interchain disulfide bond. In terms of processing, specific enzymatic cleavages in vivo yield the mature SU and TM proteins. Post-translationally, the CXXC motif is highly conserved across a broad range of retroviral envelope proteins. It is thought to participate in the formation of a labile disulfide bond possibly with the CX6CC motif present in the transmembrane protein. In terms of tissue distribution, low expression in skin, testis and trachea.

Its subcellular location is the virion. The protein resides in the cell membrane. In terms of biological role, retroviral envelope proteins mediate receptor recognition and membrane fusion during early infection. Endogenous envelope proteins may have kept, lost or modified their original function during evolution. This endogenous envelope protein has lost its original fusogenic properties. SU mediates receptor recognition. Its function is as follows. TM anchors the envelope heterodimer to the viral membrane through one transmembrane domain. The other hydrophobic domain, called fusion peptide, mediates fusion of the viral membrane with the target cell membrane. The chain is Endogenous retrovirus group FC1 Env polyprotein (ERVFC1) from Homo sapiens (Human).